We begin with the raw amino-acid sequence, 783 residues long: Mitochondrial intermediate peptidase (783 aa).

The N-terminal 33 residues, 1 to 33 (MKAGIPLSRCTQRIPLLVARQVSRNITTTTTKF), are a transit peptide targeting the mitochondrion. H565 lines the Zn(2+) pocket. Residue E566 is part of the active site. Residues H569 and H572 each coordinate Zn(2+).

This sequence belongs to the peptidase M3 family. It depends on Zn(2+) as a cofactor.

Its subcellular location is the mitochondrion matrix. It carries out the reaction Release of an N-terminal octapeptide as second stage of processing of some proteins imported into the mitochondrion.. Cleaves proteins, imported into the mitochondrion, to their mature size. While most mitochondrial precursor proteins are processed to the mature form in one step by mitochondrial processing peptidase (MPP), the sequential cleavage by MIP of an octapeptide after initial processing by MPP is a required step for a subgroup of nuclear-encoded precursor proteins destined for the matrix or the inner membrane. This is Mitochondrial intermediate peptidase (OCT1) from Candida albicans (strain SC5314 / ATCC MYA-2876) (Yeast).